The primary structure comprises 396 residues: Elongation factor Tu (396 aa).

The region spanning 10-206 (KPHVNVGTIG…ALDTYIPTPE (197 aa)) is the tr-type G domain. Positions 19–26 (GHVDHGKT) are G1. 19–26 (GHVDHGKT) provides a ligand contact to GTP. Residue Thr-26 coordinates Mg(2+). The interval 60-64 (GITIN) is G2. The G3 stretch occupies residues 81 to 84 (DCPG). GTP is bound by residues 81-85 (DCPGH) and 136-139 (NKAD). The segment at 136 to 139 (NKAD) is G4. A G5 region spans residues 174-176 (SAK).

The protein belongs to the TRAFAC class translation factor GTPase superfamily. Classic translation factor GTPase family. EF-Tu/EF-1A subfamily. In terms of assembly, monomer.

It is found in the cytoplasm. The enzyme catalyses GTP + H2O = GDP + phosphate + H(+). Functionally, GTP hydrolase that promotes the GTP-dependent binding of aminoacyl-tRNA to the A-site of ribosomes during protein biosynthesis. This is Elongation factor Tu from Bordetella avium (strain 197N).